The chain runs to 364 residues: Alanine racemase (364 aa).

Lys34 serves as the catalytic Proton acceptor; specific for D-alanine. Lys34 is modified (N6-(pyridoxal phosphate)lysine). Arg129 serves as a coordination point for substrate. Tyr259 acts as the Proton acceptor; specific for L-alanine in catalysis. A substrate-binding site is contributed by Met307.

The protein belongs to the alanine racemase family. The cofactor is pyridoxal 5'-phosphate.

The catalysed reaction is L-alanine = D-alanine. It participates in amino-acid biosynthesis; D-alanine biosynthesis; D-alanine from L-alanine: step 1/1. Functionally, catalyzes the interconversion of L-alanine and D-alanine. May also act on other amino acids. This Coxiella burnetii (strain Dugway 5J108-111) protein is Alanine racemase (alr).